A 189-amino-acid polypeptide reads, in one-letter code: Thermostable direct hemolysin 2 (189 aa).

Positions 1 to 24 (MKYRYFAKKSFLFISMLAAFKTFA) are cleaved as a signal peptide. An intrachain disulfide couples Cys-175 to Cys-185.

This sequence belongs to the TDH hemolysin family. In terms of assembly, homodimer.

In terms of biological role, bacterial hemolysins are exotoxins that attack blood cell membranes and cause cell rupture by mechanisms not clearly defined. This Vibrio parahaemolyticus serotype O3:K6 (strain RIMD 2210633) protein is Thermostable direct hemolysin 2 (tdh2).